We begin with the raw amino-acid sequence, 251 residues long: Pyridoxine 5'-phosphate synthase (251 aa).

N8 and R19 together coordinate 3-amino-2-oxopropyl phosphate. H44 (proton acceptor) is an active-site residue. Positions 46 and 51 each coordinate 1-deoxy-D-xylulose 5-phosphate. The active-site Proton acceptor is the E76. A 1-deoxy-D-xylulose 5-phosphate-binding site is contributed by T106. H200 functions as the Proton donor in the catalytic mechanism. 3-amino-2-oxopropyl phosphate is bound by residues D201 and 223–224; that span reads GH.

The protein belongs to the PNP synthase family. As to quaternary structure, homooctamer; tetramer of dimers.

It localises to the cytoplasm. The catalysed reaction is 3-amino-2-oxopropyl phosphate + 1-deoxy-D-xylulose 5-phosphate = pyridoxine 5'-phosphate + phosphate + 2 H2O + H(+). It functions in the pathway cofactor biosynthesis; pyridoxine 5'-phosphate biosynthesis; pyridoxine 5'-phosphate from D-erythrose 4-phosphate: step 5/5. Its function is as follows. Catalyzes the complicated ring closure reaction between the two acyclic compounds 1-deoxy-D-xylulose-5-phosphate (DXP) and 3-amino-2-oxopropyl phosphate (1-amino-acetone-3-phosphate or AAP) to form pyridoxine 5'-phosphate (PNP) and inorganic phosphate. This Agrobacterium fabrum (strain C58 / ATCC 33970) (Agrobacterium tumefaciens (strain C58)) protein is Pyridoxine 5'-phosphate synthase.